Consider the following 445-residue polypeptide: tRNA-2-methylthio-N(6)-dimethylallyladenosine synthase (445 aa).

An MTTase N-terminal domain is found at 7–121; sequence KHFYIKSFGC…LPELIEKAAS (115 aa). [4Fe-4S] cluster-binding residues include cysteine 16, cysteine 52, cysteine 84, cysteine 156, cysteine 160, and cysteine 163. The Radical SAM core domain occupies 142–374; it reads RQVGASAFLT…QALLNQQQFD (233 aa). In terms of domain architecture, TRAM spans 377–438; it reads QQTIGRKATV…PNSVKGQFLD (62 aa).

Belongs to the methylthiotransferase family. MiaB subfamily. In terms of assembly, monomer. [4Fe-4S] cluster is required as a cofactor.

It localises to the cytoplasm. It catalyses the reaction N(6)-dimethylallyladenosine(37) in tRNA + (sulfur carrier)-SH + AH2 + 2 S-adenosyl-L-methionine = 2-methylsulfanyl-N(6)-dimethylallyladenosine(37) in tRNA + (sulfur carrier)-H + 5'-deoxyadenosine + L-methionine + A + S-adenosyl-L-homocysteine + 2 H(+). In terms of biological role, catalyzes the methylthiolation of N6-(dimethylallyl)adenosine (i(6)A), leading to the formation of 2-methylthio-N6-(dimethylallyl)adenosine (ms(2)i(6)A) at position 37 in tRNAs that read codons beginning with uridine. This chain is tRNA-2-methylthio-N(6)-dimethylallyladenosine synthase, found in Zymomonas mobilis subsp. mobilis (strain ATCC 31821 / ZM4 / CP4).